We begin with the raw amino-acid sequence, 233 residues long: Large ribosomal subunit protein uL1 (233 aa).

This sequence belongs to the universal ribosomal protein uL1 family. Part of the 50S ribosomal subunit.

Functionally, binds directly to 23S rRNA. The L1 stalk is quite mobile in the ribosome, and is involved in E site tRNA release. Protein L1 is also a translational repressor protein, it controls the translation of the L11 operon by binding to its mRNA. In Vibrio vulnificus (strain CMCP6), this protein is Large ribosomal subunit protein uL1.